The primary structure comprises 345 residues: UDP-N-acetylenolpyruvoylglucosamine reductase (345 aa).

The FAD-binding PCMH-type domain maps to 16 to 185 (VNAFAKSVVT…VSVGLRLCKK (170 aa)). The active site involves R162. S231 functions as the Proton donor in the catalytic mechanism. E328 is a catalytic residue.

The protein belongs to the MurB family. Requires FAD as cofactor.

Its subcellular location is the cytoplasm. It catalyses the reaction UDP-N-acetyl-alpha-D-muramate + NADP(+) = UDP-N-acetyl-3-O-(1-carboxyvinyl)-alpha-D-glucosamine + NADPH + H(+). It functions in the pathway cell wall biogenesis; peptidoglycan biosynthesis. Functionally, cell wall formation. The polypeptide is UDP-N-acetylenolpyruvoylglucosamine reductase (Blochmanniella pennsylvanica (strain BPEN)).